We begin with the raw amino-acid sequence, 31 residues long: Hemocyanin subunit 2 (31 aa).

The protein belongs to the tyrosinase family. Hemocyanin subfamily. Hemolymph.

It localises to the secreted. The protein localises to the extracellular space. Functionally, hemocyanins are copper-containing oxygen carriers occurring freely dissolved in the hemolymph of many mollusks and arthropods. This is Hemocyanin subunit 2 from Maja squinado (Mediterranean spider crab).